We begin with the raw amino-acid sequence, 541 residues long: Synaptotagmin-1 (541 aa).

The Extracellular segment spans residues 1-11 (MGFFSTILGFC). The helical transmembrane segment at 12 to 32 (GFGVGISLGLVIGYVLFVYLL) threads the bilayer. Over 33–541 (PNDVKDPEIR…QIELEWRTAS (509 aa)) the chain is Cytoplasmic. Positions 67–249 (DFDRVDWINR…WPKTLVVPIL (183 aa)) constitute an SMP-LTD domain. The segment at 227–509 (QEQIKDQVAN…TLGYVDIPVV (283 aa)) is phospholipid binding. C2 domains lie at 240 to 362 (WPKT…AFTL) and 401 to 521 (GFEE…NQKF). Ca(2+) is bound by residues aspartate 276, aspartate 282, aspartate 332, and glutamate 334.

The protein belongs to the synaptotagmin family. Interacts with cabbage leaf curl virus (CaLCuV) BC1 protein and tobacco mosaic virus (TMV) MP protein. Interacts with ROSY1. Ca(2+) serves as cofactor. In terms of tissue distribution, expressed in roots, shoots, rosette and cauline leaves, inflorescences, and siliques. In roots, expressed in vascular bundle, epidermis, the differential zone of the tips of root hairs, and the quiescent center and columella of root tips.

It localises to the cell membrane. The protein localises to the endosome membrane. In terms of biological role, plays an important role in maintaining plasma membrane integrity during freezing and osmotic stresses. May function in membrane resealing during calcium-dependent freezing tolerance. May regulate endocytosis and endosome recycling at the plasma membrane and cell-to-cell trafficking of cabbage leaf curl virus (CaLCuV) and tobacco mosaic virus (TMV) movement proteins via plasmodesmata. The chain is Synaptotagmin-1 (SYT1) from Arabidopsis thaliana (Mouse-ear cress).